Reading from the N-terminus, the 356-residue chain is Cell division protein ZipA (356 aa).

Topologically, residues 1–6 (MEDLQL) are periplasmic. The helical transmembrane segment at 7-27 (VLFVLGAIAIVAVLVHGFWSI) threads the bilayer. The Cytoplasmic portion of the chain corresponds to 28-356 (RRQQPKSLKD…DYLHRIRANA (329 aa)). Residues 132–155 (PAQPDFSLQPPVAKEQHRGPKVSR) are disordered.

This sequence belongs to the ZipA family. Interacts with FtsZ via their C-terminal domains.

The protein localises to the cell inner membrane. Essential cell division protein that stabilizes the FtsZ protofilaments by cross-linking them and that serves as a cytoplasmic membrane anchor for the Z ring. Also required for the recruitment to the septal ring of downstream cell division proteins. The protein is Cell division protein ZipA of Shewanella baltica (strain OS185).